Consider the following 492-residue polypeptide: MTLWINGDWITGQGASRVKRNPVSGEVLWQGNDADAAQVEQACRAARAAFPRWARLSLAERQVVVERFAGLLESNKAELTAIIARETGKPRWEAATEVTAMINKIAISIKAYHVRTGEQRSEMPDGAASLRHRPHGVLAVFGPYNFPGHLPNGHIVPALLAGNTIIFKPSELTPWSGEAVMRLWQQAGLPPGVLNLVQGGRETGQALSALEDLDGLLFTGSANTGYQLHRQLSGQPEKILALEMGGNNPLIIDEVADIDAAVHLTIQSAFVTAGQRCTCARRLLLKSGAQGDAFLASLVAVSQRLTPGNWDDEPQPFIGGLISEQAAQQVVTAWQQLEAMGGRTLLAPRLLQAGTSLLTPGIIEMTGVGGVPDEEVFGPFLRVWRYDTFDEAIRMANNTRFGLFCGLVSPEREKFDQLLLEARAGIVNWNKPLTGAASTAPFGGIGASGNHRPSAWYAADYCAWPMASLESDSLTLPATLNPGLDFSDEVVR.

Residue 220-225 (GSANTG) participates in NAD(+) binding. Catalysis depends on residues E243 and C277.

Belongs to the aldehyde dehydrogenase family. AstD subfamily.

It carries out the reaction N-succinyl-L-glutamate 5-semialdehyde + NAD(+) + H2O = N-succinyl-L-glutamate + NADH + 2 H(+). It functions in the pathway amino-acid degradation; L-arginine degradation via AST pathway; L-glutamate and succinate from L-arginine: step 4/5. Functionally, catalyzes the NAD-dependent reduction of succinylglutamate semialdehyde into succinylglutamate. This chain is N-succinylglutamate 5-semialdehyde dehydrogenase, found in Shigella flexneri.